Here is a 518-residue protein sequence, read N- to C-terminus: GRIN2-like protein (518 aa).

Disordered regions lie at residues 1 to 23 and 467 to 500; these read MGLE…QSRT and QTEP…FRTM. Over residues 476-494 the composition is skewed to basic and acidic residues; that stretch reads KSDEDPLNKEPSSDKMEKK.

In terms of assembly, may interact with GNAO1.

Its function is as follows. May be involved in neurite outgrowth. This is GRIN2-like protein from Gallus gallus (Chicken).